The primary structure comprises 149 residues: Large ribosomal subunit protein uL11 (149 aa).

This sequence belongs to the universal ribosomal protein uL11 family. In terms of assembly, part of the ribosomal stalk of the 50S ribosomal subunit. Interacts with L10 and the large rRNA to form the base of the stalk. L10 forms an elongated spine to which L12 dimers bind in a sequential fashion forming a multimeric L10(L12)X complex. In terms of processing, one or more lysine residues are methylated.

Functionally, forms part of the ribosomal stalk which helps the ribosome interact with GTP-bound translation factors. This Methylobacterium radiotolerans (strain ATCC 27329 / DSM 1819 / JCM 2831 / NBRC 15690 / NCIMB 10815 / 0-1) protein is Large ribosomal subunit protein uL11.